The sequence spans 258 residues: Regulatory protein RecX (258 aa).

Belongs to the RecX family.

The protein localises to the cytoplasm. Its function is as follows. Modulates RecA activity. This chain is Regulatory protein RecX, found in Streptococcus agalactiae serotype Ia (strain ATCC 27591 / A909 / CDC SS700).